Reading from the N-terminus, the 509-residue chain is Solute carrier family 2, facilitated glucose transporter member 4 (509 aa).

Residues 1–23 (MPSGFQQIGSDDGEPPRQRVTGT) are Cytoplasmic-facing. The interval 7 to 13 (QIGSDDG) is interaction with SRFBP1. Phosphoserine is present on Ser-10. A helical transmembrane segment spans residues 24 to 44 (LVLAVFSAVLGSLQFGYNIGV). Topologically, residues 45-80 (INAPQKVIEQSYNATWLGRQGPGGPDSIPQGTLTTL) are extracellular. A glycan (N-linked (GlcNAc...) asparagine) is linked at Asn-57. A helical membrane pass occupies residues 81 to 101 (WALSVAIFSVGGMISSFLIGI). The Cytoplasmic segment spans residues 102-110 (ISQWLGRKR). A helical transmembrane segment spans residues 111–131 (AMLANNVLAVLGGALMGLANA). Residues 132 to 141 (AASYEILILG) are Extracellular-facing. The helical transmembrane segment at 142 to 162 (RFLIGAYSGLTSGLVPMYVGE) threads the bilayer. The Cytoplasmic portion of the chain corresponds to 163–170 (IAPTHLRG). A helical transmembrane segment spans residues 171-191 (ALGTLNQLAIVIGILVAQVLG). Gln-177 contacts D-glucose. Topologically, residues 192–200 (LESMLGTAT) are extracellular. The helical transmembrane segment at 201 to 221 (LWPLLLALTVLPALLQLILLP) threads the bilayer. The Cytoplasmic portion of the chain corresponds to 222-286 (FCPESPRYLY…QLLGSRTHRQ (65 aa)). A lipid anchor (S-palmitoyl cysteine) is attached at Cys-223. Ser-274 bears the Phosphoserine; by SGK1 mark. The chain crosses the membrane as a helical span at residues 287–307 (PLIIAVVLQLSQQLSGINAVF). D-glucose contacts are provided by residues 298-299 (QQ) and Asn-304. Residues 308 to 322 (YYSTSIFESAGVGQP) lie on the Extracellular side of the membrane. Residues 323–343 (AYATIGAGVVNTVFTLVSVLL) traverse the membrane as a helical segment. Asn-333 contacts D-glucose. The Cytoplasmic segment spans residues 344-352 (VERAGRRTL). A helical transmembrane segment spans residues 353-373 (HLLGLAGMCGCAILMTVALLL). Residues 374-384 (LERVPAMSYVS) lie on the Extracellular side of the membrane. The chain crosses the membrane as a helical span at residues 385–405 (IVAIFGFVAFFEIGPGPIPWF). Glu-396 and Trp-404 together coordinate D-glucose. Residues 406–416 (IVAELFSQGPR) lie on the Cytoplasmic side of the membrane. Residues 417–437 (PAAMAVAGFSNWTCNFIVGMG) form a helical membrane-spanning segment. Residues 438–444 (FQYVADA) are Extracellular-facing. A helical transmembrane segment spans residues 445–465 (MGPYVFLLFAVLLLGFFIFTF). Residues 466–508 (LKVPETRGRTFDQISAAFRRTPSLLEQEVKPSTELEYLGPDEN) are Cytoplasmic-facing. Residue Thr-486 is modified to Phosphothreonine. At Ser-488 the chain carries Phosphoserine. The Dileucine internalization motif motif lies at 489–490 (LL).

The protein belongs to the major facilitator superfamily. Sugar transporter (TC 2.A.1.1) family. Glucose transporter subfamily. As to quaternary structure, binds to DAXX. Interacts via its N-terminus with SRFBP1. Interacts with NDUFA9. Interacts with TRARG1; the interaction is required for proper SLC2A4 recycling after insulin stimulation. Sumoylated. In terms of processing, palmitoylated. Palmitoylation by ZDHHC7 controls the insulin-dependent translocation of GLUT4 to the plasma membrane. Expressed in skeletal and cardiac muscles. Expressed in brown and white adipose tissues.

The protein localises to the cell membrane. It is found in the endomembrane system. It localises to the cytoplasm. Its subcellular location is the perinuclear region. The enzyme catalyses D-glucose(out) = D-glucose(in). Functionally, insulin-regulated facilitative glucose transporter, which plays a key role in removal of glucose from circulation. Response to insulin is regulated by its intracellular localization: in the absence of insulin, it is efficiently retained intracellularly within storage compartments in muscle and fat cells. Upon insulin stimulation, translocates from these compartments to the cell surface where it transports glucose from the extracellular milieu into the cell. This is Solute carrier family 2, facilitated glucose transporter member 4 from Mus musculus (Mouse).